The sequence spans 510 residues: MSHIQVFDTTLRDGEQTPGVSFSFDERLTIAKQLEKWGVDVIEAGFPASSQGSFDSVKAISETLTKTAVVGLARCKKSDIDAVYEATKDAKYPQLHVFIASSPIHLEHKLKMTQEELLENITENVSYGKSLFDVVQFSPEDATRTDLDFLVKCVQTAVDAGASIINIPDTVGFSYPSEFGNIFKVLIENVKSDHEVTYSAHCHDDLGLAVANSMAAIENGATRIEGAVNGIGERAGNTALEEVALGLYVRRDHYGIETNLKLDETKATSDLVASFAGIRVPRNKAIVGQNAFSHESGIHQDGFLKHPETYEIMTPQLVGIKSSELPLGKLSGKHAFAEKLKQLGYDITAEKQVELFKQFKSIADKKKNVSDHDVHALVQGHSHETNAAYQVETLQLQFVSEGVQSAVVVLKDHEGKEYPSAAIGTGSIVAVYNAVDQIFKAPSELLNYQITSVTEGSDAQAQVNVEIRIDGKTYYGIGVDHDVLLASCKAYVEANSNHLADTARKDGVVS.

The region spanning 4 to 266 (IQVFDTTLRD…ETNLKLDETK (263 aa)) is the Pyruvate carboxyltransferase domain. D13, H201, H203, and N237 together coordinate Mn(2+). The interval 390-510 (QVETLQLQFV…DTARKDGVVS (121 aa)) is regulatory domain.

Belongs to the alpha-IPM synthase/homocitrate synthase family. LeuA type 1 subfamily. In terms of assembly, homodimer. It depends on Mn(2+) as a cofactor.

Its subcellular location is the cytoplasm. It catalyses the reaction 3-methyl-2-oxobutanoate + acetyl-CoA + H2O = (2S)-2-isopropylmalate + CoA + H(+). Its pathway is amino-acid biosynthesis; L-leucine biosynthesis; L-leucine from 3-methyl-2-oxobutanoate: step 1/4. In terms of biological role, catalyzes the condensation of the acetyl group of acetyl-CoA with 3-methyl-2-oxobutanoate (2-ketoisovalerate) to form 3-carboxy-3-hydroxy-4-methylpentanoate (2-isopropylmalate). The sequence is that of 2-isopropylmalate synthase from Staphylococcus carnosus (strain TM300).